Here is a 453-residue protein sequence, read N- to C-terminus: Pup--protein ligase (453 aa).

Position 9 (Glu9) interacts with Mg(2+). Residue Arg53 coordinates ATP. Residue Tyr55 coordinates Mg(2+). Asp57 functions as the Proton acceptor in the catalytic mechanism. Mg(2+) is bound at residue Glu63. Positions 66 and 420 each coordinate ATP.

The protein belongs to the Pup ligase/Pup deamidase family. Pup-conjugating enzyme subfamily.

The catalysed reaction is ATP + [prokaryotic ubiquitin-like protein]-L-glutamate + [protein]-L-lysine = ADP + phosphate + N(6)-([prokaryotic ubiquitin-like protein]-gamma-L-glutamyl)-[protein]-L-lysine.. It functions in the pathway protein degradation; proteasomal Pup-dependent pathway. Its pathway is protein modification; protein pupylation. Its function is as follows. Catalyzes the covalent attachment of the prokaryotic ubiquitin-like protein modifier Pup to the proteasomal substrate proteins, thereby targeting them for proteasomal degradation. This tagging system is termed pupylation. The ligation reaction involves the side-chain carboxylate of the C-terminal glutamate of Pup and the side-chain amino group of a substrate lysine. In Streptomyces avermitilis (strain ATCC 31267 / DSM 46492 / JCM 5070 / NBRC 14893 / NCIMB 12804 / NRRL 8165 / MA-4680), this protein is Pup--protein ligase.